The chain runs to 856 residues: MKLFDKNERVIKKYWKKVNKINKINLESKNLTELINSLKTIKENITPENIDEYIPEVFAIVREVSKRVIGLRPFDVQLIGAMVLHEGKVAEMKTGEGKTLVATMPVVLNALLGKGVHLVTVNDYLAKRDAMWMGPIYLALGLRVGVINTQNKSYEVIWKNEELAKKALNENLSVWPQGFNGEFLEDEAKNKEALEAYQVELKEISRKEAYECDITYGTNTEFGFDYLRDNLVIDLEDRVQRGHFYAIVDEVDSILIDEARTPLIISGPSKTKASDYIRFNQIAKKLVKDKHFTIDEQKKSVILTDEGIEYIEKLLNIENLYDPEHVNKMYFLLNALKAHYLFKKDVDYIIHNGEIVIVDEFTGRLLPGRRYSGGLHQAIEAKEGVKIKEESVTYATITYQNYFRMYEKLSGMTGTAKTEEEEFKQIYGMEVVVIPTHKPMIRIDRDDLIYRTEDEKFEAVVKEIKKRYEKGQPVLVGTTSIEKSERLSKMLSKEKIPHNVLNAKHHEKEAQIVALAGQKGSVTIATNMAGRGTDIKLGPGVKELGGLLIIGTERHESRRIDNQLRGRAGRQGDPGESIFFLSLEDDIIRIFGGEKLEKIMNLVKIEKGEPIYHPMLTKLIERVQKKVESINFGIRKNLLQMDTVLDTQRRAIYSYREYLLSGNIDEHFNDAIDDFIERRLEEFCEKGVCNVEEIKESLKILNISLDKLPDTRNELKEYLKNLLMEKFENKKKELGEDFPKIGKFIALRVIDENWRQYLEEVEHVKEAVSLRAYGQKDPILEFKKETFRMFDEMMAKIFEQTIIYTLNIRKITDEAEKESENELKKINTQHDEFTLVNRKERRVAEKKGKKKLKVKR.

ATP-binding positions include Gln77, 95-99 (GEGKT), and Asp534.

It belongs to the SecA family. Monomer and homodimer. Part of the essential Sec protein translocation apparatus which comprises SecA, SecYEG and auxiliary proteins SecDF. Other proteins may also be involved.

It localises to the cell inner membrane. It is found in the cytoplasm. The catalysed reaction is ATP + H2O + cellular proteinSide 1 = ADP + phosphate + cellular proteinSide 2.. Its function is as follows. Part of the Sec protein translocase complex. Interacts with the SecYEG preprotein conducting channel. Has a central role in coupling the hydrolysis of ATP to the transfer of proteins into and across the cell membrane, serving as an ATP-driven molecular motor driving the stepwise translocation of polypeptide chains across the membrane. The protein is Protein translocase subunit SecA of Thermosipho africanus (strain TCF52B).